Here is a 502-residue protein sequence, read N- to C-terminus: Alpha-ketoglutarate-dependent dioxygenase FTO (502 aa).

The fe2OG dioxygenase domain stretch occupies residues 32-324 (TPKDDEFYQQ…SSTHRVAECS (293 aa)). Arg-96 and Tyr-108 together coordinate substrate. Asn-202 serves as a coordination point for 2-oxoglutarate. Residues 210–221 (PYLKEEPYFGMG) form a loop L1; predicted to block binding of double-stranded DNA or RNA region. N6-acetyllysine is present on Lys-213. Positions 228 and 230 each coordinate Fe cation. 228 to 231 (HHDE) is a substrate binding site. A 2-oxoglutarate-binding site is contributed by Tyr-292. His-304 contacts Fe cation. 2-oxoglutarate contacts are provided by residues 313 to 315 (RFS), Thr-317, and Arg-319.

The protein belongs to the fto family. As to quaternary structure, monomer. May also exist as homodimer. Fe(2+) is required as a cofactor. As to expression, ubiquitous. Detected in brain, brain cortex, hypothalamus, cerebellum, liver, pancreas, heart, kidney, white adipose tissue and skeletal muscle. Most abundant in the brain, particularly in hypothalamic nuclei governing energy balance.

Its subcellular location is the nucleus. The protein localises to the nucleus speckle. The protein resides in the cytoplasm. The catalysed reaction is a 5'-end (N(7)-methyl 5'-triphosphoguanosine)-(N(6),2'-O-dimethyladenosine) in mRNA + 2-oxoglutarate + O2 = a 5'-end (N(7)-methyl 5'-triphosphoguanosine)-(2'-O-methyladenosine) in mRNA + formaldehyde + succinate + CO2. It carries out the reaction an N(6)-methyladenosine in mRNA + 2-oxoglutarate + O2 = an adenosine in mRNA + formaldehyde + succinate + CO2. It catalyses the reaction N(6)-methyladenosine in U6 snRNA + 2-oxoglutarate + O2 = adenosine in U6 snRNA + formaldehyde + succinate + CO2. The enzyme catalyses a 5'-end (N(7)-methyl 5'-triphosphoguanosine)-(N(6),2'-O-dimethyladenosine) in U6 snRNA + 2-oxoglutarate + O2 = a 5'-end (N(7)-methyl 5'-triphosphoguanosine)-(2'-O-methyladenosine) in U6 snRNA + formaldehyde + succinate + CO2. The catalysed reaction is an N(1)-methyladenosine in tRNA + 2-oxoglutarate + O2 = an adenosine in tRNA + formaldehyde + succinate + CO2. With respect to regulation, activated by ascorbate. Inhibited by N-oxalylglycine, fumarate and succinate. RNA demethylase that mediates oxidative demethylation of different RNA species, such as mRNAs, tRNAs and snRNAs, and acts as a regulator of fat mass, adipogenesis and energy homeostasis. Specifically demethylates N(6)-methyladenosine (m6A) RNA, the most prevalent internal modification of messenger RNA (mRNA) in higher eukaryotes. M6A demethylation by FTO affects mRNA expression and stability. Also able to demethylate m6A in U6 small nuclear RNA (snRNA). Mediates demethylation of N(6),2'-O-dimethyladenosine cap (m6A(m)), by demethylating the N(6)-methyladenosine at the second transcribed position of mRNAs and U6 snRNA. Demethylation of m6A(m) in the 5'-cap by FTO affects mRNA stability by promoting susceptibility to decapping. Also acts as a tRNA demethylase by removing N(1)-methyladenine from various tRNAs. Has no activity towards 1-methylguanine. Has no detectable activity towards double-stranded DNA. Also able to repair alkylated DNA and RNA by oxidative demethylation: demethylates single-stranded RNA containing 3-methyluracil, single-stranded DNA containing 3-methylthymine and has low demethylase activity towards single-stranded DNA containing 1-methyladenine or 3-methylcytosine. Ability to repair alkylated DNA and RNA is however unsure in vivo. Involved in the regulation of fat mass, adipogenesis and body weight, thereby contributing to the regulation of body size and body fat accumulation. Involved in the regulation of thermogenesis and the control of adipocyte differentiation into brown or white fat cells. Regulates activity of the dopaminergic midbrain circuitry via its ability to demethylate m6A in mRNAs. The polypeptide is Alpha-ketoglutarate-dependent dioxygenase FTO (Mus musculus (Mouse)).